The chain runs to 389 residues: Formate-dependent phosphoribosylglycinamide formyltransferase (389 aa).

N(1)-(5-phospho-beta-D-ribosyl)glycinamide is bound by residues Glu21 to Leu22 and Glu81. Residues Arg113, Lys154, Ser159 to Gln164, Glu194 to Ile197, and Glu202 contribute to the ATP site. Residues Arg118 to Leu307 form the ATP-grasp domain. Glu266 and Glu278 together coordinate Mg(2+). Residues Asp285, Lys353, and Arg360–Arg361 each bind N(1)-(5-phospho-beta-D-ribosyl)glycinamide.

It belongs to the PurK/PurT family. Homodimer.

It carries out the reaction N(1)-(5-phospho-beta-D-ribosyl)glycinamide + formate + ATP = N(2)-formyl-N(1)-(5-phospho-beta-D-ribosyl)glycinamide + ADP + phosphate + H(+). It functions in the pathway purine metabolism; IMP biosynthesis via de novo pathway; N(2)-formyl-N(1)-(5-phospho-D-ribosyl)glycinamide from N(1)-(5-phospho-D-ribosyl)glycinamide (formate route): step 1/1. In terms of biological role, involved in the de novo purine biosynthesis. Catalyzes the transfer of formate to 5-phospho-ribosyl-glycinamide (GAR), producing 5-phospho-ribosyl-N-formylglycinamide (FGAR). Formate is provided by PurU via hydrolysis of 10-formyl-tetrahydrofolate. The protein is Formate-dependent phosphoribosylglycinamide formyltransferase of Methanocaldococcus jannaschii (strain ATCC 43067 / DSM 2661 / JAL-1 / JCM 10045 / NBRC 100440) (Methanococcus jannaschii).